Consider the following 605-residue polypeptide: MVQAPSVYVCGFVERPDAPPKDACLHLDPLTVKSQLPLKKPLPLTVEHLPDAPVGSVFGLYQSRAGLFSAASITSGVFLSLLDSIYHDCDIAQSQRLPLPREPKLEALHAWLPSLSLASLHPDIPQTTADGGKLSFFDHVSICALGRRRGTTAVYGTDLAWVLKHFSDLEPSIAAQIENDANAAKRESGCPEDHPLPLTKLIAKAIDAGFLRNRVETLRQDRGVANIPAESYLKASDAPDLQKPDKALQSPPPASTDPDTMLSGNAGEGATACGGSAAAGQDLISVPRNTFMTLLQTNLDNKPPRQTPLPYAAPLPPFSHQAIATAPSYGPGAGAVAPAGGYFTSPGGYYAGPAGGDPGAFLAMDAHTYHPHPHPPPAYFGLPGLFGPPPPVPPYYGSHLRADYVPAPSRSNKRKRDPEEDEEGGGLFPGEDATLYRKDIAGLSKSVNELQHTLQALRRETLSYGHTGVGYCPQQGPCYTHPGPYGFQPHQSYEVPRYVPHPPPPPTSHQAAQAQPPPPGTQAPEAHCVAESTIPEAGAAGNSGPREDTNPQQPTTEGHHRGKKLVQASASGVAQSKEPTTPKAKSVSAHLKSIFCEELLNKRVA.

Catalysis depends on charge relay system residues His48, Ser116, and His139. The disordered stretch occupies residues 235 to 275 (ASDAPDLQKPDKALQSPPPASTDPDTMLSGNAGEGATACGG). Positions 281–300 (QDLISVPRNTFMTLLQTNLD) are interaction with pAP. Disordered stretches follow at residues 403-432 (DYVPAPSRSNKRKRDPEEDEEGGGLFPGED) and 489-588 (PHQS…KSVS). The Nuclear localization signal motif lies at 410-416 (RSNKRKR). Residues 568 to 579 (ASASGVAQSKEP) show a composition bias toward polar residues. The segment at 585–605 (KSVSAHLKSIFCEELLNKRVA) is interaction with major capsid protein.

The protein belongs to the herpesviridae capsid scaffolding protein family. In terms of assembly, homomultimer. Interacts with major capsid protein. Exists in a monomer-dimer equilibrium with the dimer being the active species. Post-translationally, capsid scaffolding protein is cleaved by assemblin after formation of the spherical procapsid. As a result, the capsid obtains its mature, icosahedral shape. Cleavages occur at two or more sites: release (R-site) and maturation (M-site).

It localises to the host cytoplasm. The protein localises to the host nucleus. The catalysed reaction is Cleaves -Ala-|-Ser- and -Ala-|-Ala- bonds in the scaffold protein.. In terms of biological role, acts as a scaffold protein by binding major capsid protein in the cytoplasm, inducing the nuclear localization of both proteins. Multimerizes in the nucleus such as major capsid protein forms the icosahedral T=16 capsid. Autocatalytic cleavage releases the assembly protein, and subsequently abolishes interaction with major capsid protein. Cleavages products are evicted from the capsid before or during DNA packaging. Protease that plays an essential role in virion assembly within the nucleus. Catalyzes the cleavage of the assembly protein after formation of the spherical procapsid. By that cleavage, the capsid matures and gains its icosahedral shape. The cleavage sites seem to include -Ala-Ser-, -Ala-Ala-, as well as Ala-Thr bonds. Assemblin and cleavages products are evicted from the capsid before or during DNA packaging. Functionally, plays a major role in capsid assembly. Acts as a scaffold protein by binding major capsid protein. Multimerizes in the nucleus such as major capsid protein forms the icosahedral T=16 capsid. Cleaved by assemblin after capsid completion. The cleavages products are evicted from the capsid before or during DNA packaging. The chain is Capsid scaffolding protein from Epstein-Barr virus (strain AG876) (HHV-4).